The chain runs to 299 residues: tRNA dimethylallyltransferase (299 aa).

13–20 contacts ATP; that stretch reads GPTASGKT. 15–20 lines the substrate pocket; the sequence is TASGKT. Residues 38–41 form an interaction with substrate tRNA region; sequence DSRQ.

Belongs to the IPP transferase family. In terms of assembly, monomer. It depends on Mg(2+) as a cofactor.

It catalyses the reaction adenosine(37) in tRNA + dimethylallyl diphosphate = N(6)-dimethylallyladenosine(37) in tRNA + diphosphate. In terms of biological role, catalyzes the transfer of a dimethylallyl group onto the adenine at position 37 in tRNAs that read codons beginning with uridine, leading to the formation of N6-(dimethylallyl)adenosine (i(6)A). This chain is tRNA dimethylallyltransferase, found in Prochlorococcus marinus (strain NATL2A).